We begin with the raw amino-acid sequence, 470 residues long: Ribulose bisphosphate carboxylase large chain (470 aa).

Residues Asn118 and Thr168 each contribute to the substrate site. Lys170 (proton acceptor) is an active-site residue. Lys172 contacts substrate. Lys196, Asp198, and Glu199 together coordinate Mg(2+). Lys196 carries the post-translational modification N6-carboxylysine. His289 acts as the Proton acceptor in catalysis. Substrate is bound by residues Arg290, His322, and Ser374.

It belongs to the RuBisCO large chain family. Type I subfamily. As to quaternary structure, heterohexadecamer of 8 large chains and 8 small chains; disulfide-linked. The disulfide link is formed within the large subunit homodimers. RuBisCO interacts with the C-terminus of CcmM, and can be found in complexes that also include carbonic anhydrase (ccaA). RuBisCO associates with both the internal and shell portion of carboxysomes. Mg(2+) serves as cofactor. The disulfide bond which can form in the large chain dimeric partners within the hexadecamer appears to be associated with oxidative stress and protein turnover.

It localises to the carboxysome. It catalyses the reaction 2 (2R)-3-phosphoglycerate + 2 H(+) = D-ribulose 1,5-bisphosphate + CO2 + H2O. The enzyme catalyses D-ribulose 1,5-bisphosphate + O2 = 2-phosphoglycolate + (2R)-3-phosphoglycerate + 2 H(+). In terms of biological role, ruBisCO catalyzes two reactions: the carboxylation of D-ribulose 1,5-bisphosphate, the primary event in carbon dioxide fixation, as well as the oxidative fragmentation of the pentose substrate in the photorespiration process. Both reactions occur simultaneously and in competition at the same active site. This chain is Ribulose bisphosphate carboxylase large chain, found in Synechocystis sp. (strain ATCC 27184 / PCC 6803 / Kazusa).